The sequence spans 631 residues: Phosphomethylpyrimidine synthase (631 aa).

Residues Asn239, Met268, Tyr297, His333, 353–355 (SRG), 394–397 (DGLR), and Glu433 contribute to the substrate site. His437 contacts Zn(2+). Position 460 (Tyr460) interacts with substrate. Residue His501 coordinates Zn(2+). Residues Cys581, Cys584, and Cys589 each contribute to the [4Fe-4S] cluster site.

The protein belongs to the ThiC family. In terms of assembly, homodimer. Requires [4Fe-4S] cluster as cofactor.

The catalysed reaction is 5-amino-1-(5-phospho-beta-D-ribosyl)imidazole + S-adenosyl-L-methionine = 4-amino-2-methyl-5-(phosphooxymethyl)pyrimidine + CO + 5'-deoxyadenosine + formate + L-methionine + 3 H(+). The protein operates within cofactor biosynthesis; thiamine diphosphate biosynthesis. Functionally, catalyzes the synthesis of the hydroxymethylpyrimidine phosphate (HMP-P) moiety of thiamine from aminoimidazole ribotide (AIR) in a radical S-adenosyl-L-methionine (SAM)-dependent reaction. The polypeptide is Phosphomethylpyrimidine synthase (Ralstonia nicotianae (strain ATCC BAA-1114 / GMI1000) (Ralstonia solanacearum)).